The chain runs to 566 residues: Arginine--tRNA ligase (566 aa).

The short motif at 123–133 is the 'HIGH' region element; it reads PNIAKPFHIGH.

Belongs to the class-I aminoacyl-tRNA synthetase family. Monomer.

Its subcellular location is the cytoplasm. The enzyme catalyses tRNA(Arg) + L-arginine + ATP = L-arginyl-tRNA(Arg) + AMP + diphosphate. The protein is Arginine--tRNA ligase of Clostridioides difficile (strain 630) (Peptoclostridium difficile).